Here is a 399-residue protein sequence, read N- to C-terminus: uncharacterized protein (399 aa).

11 consecutive transmembrane segments (helical) span residues 19-39, 46-66, 91-111, 123-143, 146-166, 183-203, 225-247, 283-303, 307-327, 335-355, and 369-389; these read IFSI…PLFV, VNLL…LLMY, FYTI…PILG, QFEQ…IIAS, IYAK…IFIA, LLSA…ISYI, VAIL…MPIW, VLLL…LLGF, FGLD…FAYL, LFSI…YLGY, and IEYT…VYLL.

It is found in the host membrane. Functionally, putative amino acid transporter. This is an uncharacterized protein from Saccharolobus islandicus (Sulfolobus islandicus).